We begin with the raw amino-acid sequence, 281 residues long: Ribonuclease HII (281 aa).

The interval 1–46 is disordered; the sequence is MIRDTKQPIKVPAKPASRSGGKAKTVKPKTIKPKTSAKAAAAKPAS. A compositionally biased stretch (low complexity) spans 33-46; the sequence is PKTSAKAAAAKPAS. In terms of domain architecture, RNase H type-2 spans 73 to 261; that stretch reads WPIAGCDEAG…VAAAWQKIEG (189 aa). A divalent metal cation contacts are provided by Asp-79, Glu-80, and Asp-170.

The protein belongs to the RNase HII family. Mn(2+) is required as a cofactor. The cofactor is Mg(2+).

It localises to the cytoplasm. It carries out the reaction Endonucleolytic cleavage to 5'-phosphomonoester.. Its function is as follows. Endonuclease that specifically degrades the RNA of RNA-DNA hybrids. In Rhodopseudomonas palustris (strain TIE-1), this protein is Ribonuclease HII.